The primary structure comprises 332 residues: tRNA-dihydrouridine synthase B (332 aa).

FMN contacts are provided by residues 16 to 18 (PMA) and Gln-70. Residue Cys-100 is the Proton donor of the active site. FMN-binding positions include Lys-139, 200–202 (NGD), and 224–225 (GR).

Belongs to the Dus family. DusB subfamily. Requires FMN as cofactor.

The catalysed reaction is a 5,6-dihydrouridine in tRNA + NAD(+) = a uridine in tRNA + NADH + H(+). It carries out the reaction a 5,6-dihydrouridine in tRNA + NADP(+) = a uridine in tRNA + NADPH + H(+). Its function is as follows. Catalyzes the synthesis of 5,6-dihydrouridine (D), a modified base found in the D-loop of most tRNAs, via the reduction of the C5-C6 double bond in target uridines. The polypeptide is tRNA-dihydrouridine synthase B (Xanthomonas axonopodis pv. citri (strain 306)).